The chain runs to 142 residues: HTH-type transcriptional regulator MntR (142 aa).

In terms of domain architecture, HTH dtxR-type spans 1-63; that stretch reads MPTPSMEDYI…YEKYRGLVLT (63 aa). The Mn(2+) site is built by Asp-8, Glu-11, His-77, Glu-99, Glu-102, and His-103.

Belongs to the DtxR/MntR family. As to quaternary structure, homodimer.

It localises to the cytoplasm. DNA binding is strongly activated by Mn(2+). In terms of biological role, central regulator of manganese homeostasis. This chain is HTH-type transcriptional regulator MntR, found in Bacillus cereus (strain ATCC 14579 / DSM 31 / CCUG 7414 / JCM 2152 / NBRC 15305 / NCIMB 9373 / NCTC 2599 / NRRL B-3711).